The following is a 382-amino-acid chain: Homoserine O-succinyltransferase (382 aa).

The AB hydrolase-1 domain occupies 51 to 359 (NAVLICHALS…DAPWGHDAFL (309 aa)). Serine 157 functions as the Nucleophile in the catalytic mechanism. Arginine 227 contributes to the substrate binding site. Active-site residues include aspartate 322 and histidine 355. Position 356 (aspartate 356) interacts with substrate.

It belongs to the AB hydrolase superfamily. MetX family. Homodimer.

It is found in the cytoplasm. The catalysed reaction is L-homoserine + succinyl-CoA = O-succinyl-L-homoserine + CoA. Its pathway is amino-acid biosynthesis; L-methionine biosynthesis via de novo pathway; O-succinyl-L-homoserine from L-homoserine: step 1/1. Its function is as follows. Transfers a succinyl group from succinyl-CoA to L-homoserine, forming succinyl-L-homoserine. The sequence is that of Homoserine O-succinyltransferase from Marinobacter nauticus (strain ATCC 700491 / DSM 11845 / VT8) (Marinobacter aquaeolei).